The sequence spans 192 residues: MSEIVNLSSSLRSLNPKISPLVPPYRQTSSSFSRPRNFKYHSFTDKICLAAERIRAVDIQKQDGGLQELDDSPVSVELGPICGESHFDQVMEDAQKLGESVVIVWMAAWCRKCIYLKPKLEKLAAEFYPRLRFYHVDVNAVPYRLVSRAGVTKMPTIQLWRDGQKQAEVIGGHKAHFVVNEVREMIENDSIT.

A chloroplast-targeting transit peptide spans 1 to 55; that stretch reads MSEIVNLSSSLRSLNPKISPLVPPYRQTSSSFSRPRNFKYHSFTDKICLAAERIR. The Thioredoxin domain occupies 66-191; it reads LQELDDSPVS…VREMIENDSI (126 aa). Residues Cys110 and Cys113 each act as nucleophile in the active site. Cys110 and Cys113 form a disulfide bridge.

This sequence belongs to the thioredoxin family.

It localises to the plastid. It is found in the chloroplast stroma. Its function is as follows. Probable thiol-disulfide oxidoreductase that may participate in various redox reactions. The polypeptide is Thioredoxin-like 3-2, chloroplastic (WCRKC2) (Arabidopsis thaliana (Mouse-ear cress)).